We begin with the raw amino-acid sequence, 325 residues long: ATP synthase gamma chain (325 aa).

This sequence belongs to the ATPase gamma chain family. In terms of assembly, F-type ATPases have 2 components, CF(1) - the catalytic core - and CF(0) - the membrane proton channel. CF(1) has five subunits: alpha(3), beta(3), gamma(1), delta(1), epsilon(1). CF(0) has three main subunits: a, b and c.

It is found in the cell membrane. Its function is as follows. Produces ATP from ADP in the presence of a proton gradient across the membrane. The gamma chain is believed to be important in regulating ATPase activity and the flow of protons through the CF(0) complex. This is ATP synthase gamma chain from Corynebacterium glutamicum (strain R).